Consider the following 561-residue polypeptide: Dihydroxy-acid dehydratase (561 aa).

Cys51 is a [2Fe-2S] cluster binding site. Asp83 is a binding site for Mg(2+). Residue Cys124 coordinates [2Fe-2S] cluster. Asp125 and Lys126 together coordinate Mg(2+). Lys126 bears the N6-carboxylysine mark. A [2Fe-2S] cluster-binding site is contributed by Cys196. Residue Glu448 participates in Mg(2+) binding. Ser473 serves as the catalytic Proton acceptor.

The protein belongs to the IlvD/Edd family. Homodimer. The cofactor is [2Fe-2S] cluster. Mg(2+) is required as a cofactor.

The enzyme catalyses (2R)-2,3-dihydroxy-3-methylbutanoate = 3-methyl-2-oxobutanoate + H2O. It catalyses the reaction (2R,3R)-2,3-dihydroxy-3-methylpentanoate = (S)-3-methyl-2-oxopentanoate + H2O. It participates in amino-acid biosynthesis; L-isoleucine biosynthesis; L-isoleucine from 2-oxobutanoate: step 3/4. Its pathway is amino-acid biosynthesis; L-valine biosynthesis; L-valine from pyruvate: step 3/4. Functionally, functions in the biosynthesis of branched-chain amino acids. Catalyzes the dehydration of (2R,3R)-2,3-dihydroxy-3-methylpentanoate (2,3-dihydroxy-3-methylvalerate) into 2-oxo-3-methylpentanoate (2-oxo-3-methylvalerate) and of (2R)-2,3-dihydroxy-3-methylbutanoate (2,3-dihydroxyisovalerate) into 2-oxo-3-methylbutanoate (2-oxoisovalerate), the penultimate precursor to L-isoleucine and L-valine, respectively. This chain is Dihydroxy-acid dehydratase, found in Sulfolobus acidocaldarius (strain ATCC 33909 / DSM 639 / JCM 8929 / NBRC 15157 / NCIMB 11770).